A 365-amino-acid polypeptide reads, in one-letter code: Phospho-N-acetylmuramoyl-pentapeptide-transferase (365 aa).

The next 10 membrane-spanning stretches (helical) occupy residues 15-35 (PSGT…AVLI), 51-71 (VPVL…VPLL), 96-116 (TMGG…FAGF), 121-141 (IAVA…DWQV), 156-176 (LILQ…TAPE), 180-200 (ITFF…LAGF), 217-237 (GLAG…ALPA), 238-258 (HPGL…FIYH), 279-299 (LAAA…SGIF), and 344-364 (TQIV…SFIL).

Belongs to the glycosyltransferase 4 family. MraY subfamily. It depends on Mg(2+) as a cofactor.

The protein localises to the cell inner membrane. It carries out the reaction UDP-N-acetyl-alpha-D-muramoyl-L-alanyl-gamma-D-glutamyl-meso-2,6-diaminopimeloyl-D-alanyl-D-alanine + di-trans,octa-cis-undecaprenyl phosphate = di-trans,octa-cis-undecaprenyl diphospho-N-acetyl-alpha-D-muramoyl-L-alanyl-D-glutamyl-meso-2,6-diaminopimeloyl-D-alanyl-D-alanine + UMP. It functions in the pathway cell wall biogenesis; peptidoglycan biosynthesis. Functionally, catalyzes the initial step of the lipid cycle reactions in the biosynthesis of the cell wall peptidoglycan: transfers peptidoglycan precursor phospho-MurNAc-pentapeptide from UDP-MurNAc-pentapeptide onto the lipid carrier undecaprenyl phosphate, yielding undecaprenyl-pyrophosphoryl-MurNAc-pentapeptide, known as lipid I. This chain is Phospho-N-acetylmuramoyl-pentapeptide-transferase, found in Picosynechococcus sp. (strain ATCC 27264 / PCC 7002 / PR-6) (Agmenellum quadruplicatum).